A 283-amino-acid polypeptide reads, in one-letter code: Apidaecins type 73 (283 aa).

The signal sequence occupies residues 1–18 (KNFALAILVVTFVVAVFG). 9 consecutive propeptides follow at residues 19-41 (NTNL…EAEP), 62-69 (EAEPEAEP), 90-97 (EAELEAEP), 118-125 (EAEPEAEP), 146-153 (EAELEAEP), 174-181 (EAEPEAEP), 202-209 (EAEPEAEP), 230-237 (EAEPEAEP), and 258-265 (EAKPEAKP). The interval 19–283 (NTNLDPPTRP…PQPRPPHPRI (265 aa)) is disordered. A compositionally biased stretch (pro residues) spans 273 to 283 (IPQPRPPHPRI).

Belongs to the apidaecin family.

Its subcellular location is the secreted. In terms of biological role, apidaecins have bactericidal activity; predominantly against Gram-negative bacteria. They seem to interfere with cell propagation. The chain is Apidaecins type 73 (APID73) from Apis mellifera (Honeybee).